A 544-amino-acid chain; its full sequence is Sialidase (544 aa).

Residues 1–22 (MKKAVILFSLFCFLCAIPVVQA) form the signal peptide. 3 BNR repeats span residues 239-250 (SRSTDGGKTWEK), 318-329 (AKSTDDGKTWSA), and 378-389 (MYSKDGGKNWKM). The active site involves Glu399. Arg415 lines the substrate pocket. The BNR 4 repeat unit spans residues 425 to 436 (AITKDLGKTWTE). Arg479 is a substrate binding site. The BNR 5 repeat unit spans residues 485–496 (KISLDGGVTWSP).

The protein belongs to the glycosyl hydrolase 33 family.

Its subcellular location is the periplasm. The catalysed reaction is Hydrolysis of alpha-(2-&gt;3)-, alpha-(2-&gt;6)-, alpha-(2-&gt;8)- glycosidic linkages of terminal sialic acid residues in oligosaccharides, glycoproteins, glycolipids, colominic acid and synthetic substrates.. In terms of biological role, sialidases have been suggested to be pathogenic factors in microbial infections. The sequence is that of Sialidase (nanH) from Bacteroides fragilis (strain YCH46).